The chain runs to 342 residues: MDDKPNPEALSDSSERLFSFGVIADVQFADLEDGFNFQGTRRRYYRHSLLHLQGAIEDWNNESSMPCCVLQLGDIIDGYNAQYNASKKSLELVMDMFKRLKVPVHHTWGNHEFYNFSREYLTHSKLNTKFLEDQIVHHPETMPSEDYYAYHFVPFPKFRFILLDAYDLSVLGVDQSSPKYEQCMKILREHNPNTELNSPQGLSEPQFVQFNGGFSQEQLNWLNEVLTFSDTNQEKVVIVSHLPIYPDASDNVCLAWNYRDALAVIWSHECVVCFFAGHTHDGGYSEDPFGVYHVNLEGVIETAPDSQAFGTVHVYPDKMMLKGRGRVPDRIMNYKKERAFHC.

M1 carries the N-acetylmethionine modification. Zn(2+)-binding residues include D25, Q27, D74, N110, H241, H278, and H280.

Belongs to the ADPRibase-Mn family. As to quaternary structure, monomer. Mg(2+) serves as cofactor.

It carries out the reaction CDP-choline + H2O = phosphocholine + CMP + 2 H(+). The catalysed reaction is ADP-D-ribose + H2O = D-ribose 5-phosphate + AMP + 2 H(+). The enzyme catalyses CDP-glycerol + H2O = sn-glycerol 3-phosphate + CMP + 2 H(+). Functionally, hydrolyzes ADP-ribose, IDP-ribose, CDP-glycerol, CDP-choline and CDP-ethanolamine, but not other non-reducing ADP-sugars or CDP-glucose. May be involved in immune cell signaling as suggested by the second-messenger role of ADP-ribose, which activates TRPM2 as a mediator of oxidative/nitrosative stress. The sequence is that of Manganese-dependent ADP-ribose/CDP-alcohol diphosphatase (ADPRM) from Homo sapiens (Human).